The following is a 210-amino-acid chain: Small ribosomal subunit protein uS3 (210 aa).

Positions 38 to 106 (IRAFLKKRLY…EIFINIIEVR (69 aa)) constitute a KH type-2 domain.

It belongs to the universal ribosomal protein uS3 family. As to quaternary structure, part of the 30S ribosomal subunit. Forms a tight complex with proteins S10 and S14.

Functionally, binds the lower part of the 30S subunit head. Binds mRNA in the 70S ribosome, positioning it for translation. The protein is Small ribosomal subunit protein uS3 of Pelobacter propionicus (strain DSM 2379 / NBRC 103807 / OttBd1).